The sequence spans 702 residues: MSKKWNIDMVRNIGISAHIDSGKTTTSERILFYGGRIHAIHEVRGKDGVGATMDSMDLEREKGITIQSAATQVQWKDYTINLIDTPGHVDFTVEVERSLRVLDGAILLLCGVAGVQSQSITVDRQMKRYNVPRLAFVNKLDRQGANPYRVTDALIEKLRLNAVMIQIPIGLEDQHRGHVDLTDMKAYINQGESGENVLVEEIPADLVETAKKYRQIMIGKLADVDSAIEEKFLMEEEPTTEEIRAAIRKGTIGLKLVPVLCGSAFKNKGVQRLMDAVTYYLPSPAEKKEQALDITKNEEKFDLHPDPTKPLVALAFKLQETPFGQLTYMRVYQGKMGKGDFIVNQVNKKSVKIPRLVRMHSDKMEDIDVSYAGDIVALFGIDCASGDTFCDENIQASMQSMHVPDSVISLAIAPKDKTAANNFSKALQKFRKEDPTFRVHRDEESNETIISGMGELHLEIYVERMKREFNCEVIVGQPQVAYRETISVEAPYDYTHKKQTGGSGQYAKIVGKIQPLPPQEDGAVFKFENKVVGGRIPKEFIPAVEEGFKEQTVKGPLIGFPIVGVEVVLEDGAYHDVDSSYMAFKIAGMAALREVYASAKPTVLEPIMKLETTVPDEYQGSAVGQINQRRGSIVATTAFEGNCVIEAEVPLTEMFGYSTDLRSATKGKGEFSMEFAKYAPVPRNIQEELAKKYQAKRAAEQK.

In terms of domain architecture, tr-type G spans Asp8–Ala285. Residues Ala17–Thr24, Asp84–His88, and Asn138–Asp141 each bind GTP.

It belongs to the TRAFAC class translation factor GTPase superfamily. Classic translation factor GTPase family. EF-G/EF-2 subfamily.

The protein resides in the cytoplasm. Catalyzes the GTP-dependent ribosomal translocation step during translation elongation. During this step, the ribosome changes from the pre-translocational (PRE) to the post-translocational (POST) state as the newly formed A-site-bound peptidyl-tRNA and P-site-bound deacylated tRNA move to the P and E sites, respectively. Catalyzes the coordinated movement of the two tRNA molecules, the mRNA and conformational changes in the ribosome. This is Elongation factor G 2 from Bdellovibrio bacteriovorus (strain ATCC 15356 / DSM 50701 / NCIMB 9529 / HD100).